Reading from the N-terminus, the 415-residue chain is Calreticulin (415 aa).

Positions 1 to 20 (MANPKSLSLFLLSLLAIASA) are cleaved as a signal peptide. Asparagine 52 carries an N-linked (GlcNAc...) asparagine glycan. A disulfide bridge connects residues cysteine 106 and cysteine 138. Residues tyrosine 110, lysine 112, tyrosine 129, and aspartate 136 each contribute to the an alpha-D-glucoside site. Asparagine 152 carries an N-linked (GlcNAc...) asparagine glycan. Tandem repeats lie at residues 192–203 (KQTGSLYTDWDL), 211–222 (DPEAKKPEDWDE), 228–239 (DPEDKKPEGYDD), 246–257 (DPDAKKPEDWDD), 261–271 (GEWTAPTIANP), 275–285 (GPWKPKKIKNP), and 289–299 (GKWKAPMIDNP). Positions 192 to 257 (KQTGSLYTDW…DAKKPEDWDD (66 aa)) are 4 X approximate repeats. Residues 208–253 (KIKDPEAKKPEDWDEKEYIPDPEDKKPEGYDDIPKEIPDPDAKKPE) are compositionally biased toward basic and acidic residues. The segment at 208 to 276 (KIKDPEAKKP…TIANPEYKGP (69 aa)) is disordered. Residues 261–299 (GEWTAPTIANPEYKGPWKPKKIKNPNYKGKWKAPMIDNP) are 3 X approximate repeats. An an alpha-D-glucoside-binding site is contributed by glutamate 319. Residues 347 to 376 (ETWGKNKDAEKAAFEEAEKKKEEEESKDDP) are compositionally biased toward basic and acidic residues. The disordered stretch occupies residues 347-415 (ETWGKNKDAE…DSAEDVHDEL (69 aa)). 2 stretches are compositionally biased toward acidic residues: residues 377–397 (ADSD…EDDG) and 404–415 (AEDSAEDVHDEL). Residues 412–415 (HDEL) carry the Prevents secretion from ER motif.

This sequence belongs to the calreticulin family.

Its subcellular location is the endoplasmic reticulum lumen. Its function is as follows. Molecular calcium-binding chaperone promoting folding, oligomeric assembly and quality control in the ER via the calreticulin/calnexin cycle. This lectin may interact transiently with almost all of the monoglucosylated glycoproteins that are synthesized in the ER. This is Calreticulin from Ricinus communis (Castor bean).